We begin with the raw amino-acid sequence, 582 residues long: Hemagglutinin-neuraminidase (582 aa).

A helical transmembrane segment spans residues 35–55 (ILVLSVQAVTLILVIVNLGEL). 3 disulfides stabilise this stretch: cysteine 178–cysteine 202, cysteine 192–cysteine 253, and cysteine 244–cysteine 257. N-linked (GlcNAc...) asparagine; by host glycans are attached at residues asparagine 284 and asparagine 329. Intrachain disulfides connect cysteine 350–cysteine 471, cysteine 382–cysteine 392, and cysteine 465–cysteine 475. N-linked (GlcNAc...) asparagine; by host glycans are attached at residues asparagine 400 and asparagine 448. Asparagine 507 carries an N-linked (GlcNAc...) asparagine; by host glycan. The cysteines at positions 545 and 556 are disulfide-linked.

It belongs to the paramyxoviruses hemagglutinin-neuraminidase family. Homotetramer; composed of disulfide-linked homodimers. Interacts with F protein trimer.

The protein resides in the virion membrane. It is found in the host cell membrane. It catalyses the reaction Hydrolysis of alpha-(2-&gt;3)-, alpha-(2-&gt;6)-, alpha-(2-&gt;8)- glycosidic linkages of terminal sialic acid residues in oligosaccharides, glycoproteins, glycolipids, colominic acid and synthetic substrates.. In terms of biological role, attaches the virus to alpha-2,3-linked sialic acid-containing cell receptors and thereby initiating infection. Binding of HN protein to the receptor induces a conformational change that allows the F protein to trigger virion/cell membranes fusion. Binds to the glycan motifs sialyl Lewis (SLe) and GM2 ganglioside (GM2-glycan). Neuraminidase activity ensures the efficient spread of the virus by dissociating the mature virions from the neuraminic acid containing glycoproteins. In Homo sapiens (Human), this protein is Hemagglutinin-neuraminidase (HN).